The primary structure comprises 131 residues: Small ribosomal subunit protein uS9 (131 aa).

Residues 102–131 form a disordered region; it reads AGFLTRDPRMKERRKYGLKKARKAPQFSKR. Positions 112 to 131 are enriched in basic residues; it reads KERRKYGLKKARKAPQFSKR.

This sequence belongs to the universal ribosomal protein uS9 family.

The chain is Small ribosomal subunit protein uS9 from Desulfitobacterium hafniense (strain DSM 10664 / DCB-2).